We begin with the raw amino-acid sequence, 483 residues long: Zinc metalloproteinase/disintegrin (483 aa).

The signal sequence occupies residues 1–20 (MIQVLLVTLCLAAFPYQGNS). A propeptide spanning residues 21-191 (IILESGNVND…KASQLNLTPE (171 aa)) is cleaved from the precursor. The region spanning 198–394 (RYIELVVVAD…HNPQCMLNEP (197 aa)) is the Peptidase M12B domain. Ca(2+) contacts are provided by Glu-201 and Asp-285. 3 disulfides stabilise this stretch: Cys-309–Cys-389, Cys-349–Cys-373, and Cys-351–Cys-356. Zn(2+) is bound at residue His-334. Glu-335 is a catalytic residue. Zn(2+)-binding residues include His-338 and His-344. The Ca(2+) site is built by Cys-389 and Asn-392. Residues 395–414 (LRTDIVSTPVSGNELWETGE) constitute a propeptide that is removed on maturation. Positions 402-483 (TPVSGNELWE…AGCPRNPFHA (82 aa)) constitute a Disintegrin domain. 4 disulfides stabilise this stretch: Cys-425/Cys-448, Cys-439/Cys-445, Cys-444/Cys-469, and Cys-457/Cys-476. The Cell attachment site; atypical (KGD) signature appears at 461–463 (KGD).

Belongs to the venom metalloproteinase (M12B) family. P-II subfamily. P-IIe sub-subfamily. As to quaternary structure, heterodimer with piscivostatin-alpha; disulfide-linked (disintegrin). Zn(2+) is required as a cofactor. As to expression, expressed by the venom gland.

It is found in the secreted. Its function is as follows. Impairs hemostasis in the envenomed animal. Inhibits platelet aggregation induced by ADP. Acts by inhibiting fibrinogen interaction with platelet receptors GPIIb/GPIIIa (ITGA2B/ITGB3). Also inhibits platelet aggregate dissociation in human platelet-rich plasma. The protein is Zinc metalloproteinase/disintegrin of Agkistrodon piscivorus piscivorus (Eastern cottonmouth).